A 230-amino-acid polypeptide reads, in one-letter code: Large ribosomal subunit protein uL4 (230 aa).

The interval 51–105 is disordered; sequence RAAARQGTHSTKTRGDVSGGGRKPYRQKGTGRARQGSMRAPQFTGGGIVHGPKLR.

This sequence belongs to the universal ribosomal protein uL4 family. In terms of assembly, part of the 50S ribosomal subunit.

In terms of biological role, one of the primary rRNA binding proteins, this protein initially binds near the 5'-end of the 23S rRNA. It is important during the early stages of 50S assembly. It makes multiple contacts with different domains of the 23S rRNA in the assembled 50S subunit and ribosome. Functionally, forms part of the polypeptide exit tunnel. The chain is Large ribosomal subunit protein uL4 from Mycobacterium leprae (strain Br4923).